The following is a 199-amino-acid chain: Imidazoleglycerol-phosphate dehydratase (199 aa).

The protein belongs to the imidazoleglycerol-phosphate dehydratase family.

It localises to the cytoplasm. The enzyme catalyses D-erythro-1-(imidazol-4-yl)glycerol 3-phosphate = 3-(imidazol-4-yl)-2-oxopropyl phosphate + H2O. It participates in amino-acid biosynthesis; L-histidine biosynthesis; L-histidine from 5-phospho-alpha-D-ribose 1-diphosphate: step 6/9. This chain is Imidazoleglycerol-phosphate dehydratase, found in Lactococcus lactis subsp. cremoris (strain MG1363).